The following is a 152-amino-acid chain: MDEQEIQRLVEEVSLQYFGMPFLHKAMFNSRLRTTGGRYLLNTHNIELNYRYYEMYGKEELVGIVKHELCHYHLHITGRGYKHRDKDFRELLKAVDAPRFCKRMINEEKGKKVYMYECMECSLQYVRRRQINTKRYVCGKCKGKLILIKKTS.

Residues 7–148 (QRLVEEVSLQ…GKCKGKLILI (142 aa)) form the SprT-like domain. Residue His67 coordinates Zn(2+). Glu68 is a catalytic residue. His71 lines the Zn(2+) pocket.

Belongs to the SprT family. Zn(2+) serves as cofactor.

The protein resides in the cytoplasm. This Bacillus thuringiensis subsp. konkukian (strain 97-27) protein is Protein SprT-like.